The primary structure comprises 1038 residues: Rap guanine nucleotide exchange factor 1 (1038 aa).

Position 10 to 140 (10 to 140 (RLSPLHTFSD…DILTDETPSD (131 aa))) interacts with a nucleoside 3',5'-cyclic phosphate. The region spanning 234–316 (TDNHQVIRDI…KTNSYYRWVQ (83 aa)) is the DEP domain. 375-492 (ALSHLSTMVK…VRLKDYGEDV (118 aa)) is a binding site for a nucleoside 3',5'-cyclic phosphate. The 139-residue stretch at 516–654 (CGYSVMAGKA…DILTRIGSIR (139 aa)) folds into the N-terminal Ras-GEF domain. The region spanning 795–1028 (DSQELAHQLF…MQLSYEIEPK (234 aa)) is the Ras-GEF domain.

As to quaternary structure, interacts (via C-terminus) with drn-1. Expressed specifically in neurons including the nerve ring, ventral and dorsal nerve cord motor neurons and tail ganglia.

In terms of biological role, guanine nucleotide-releasing protein. Together with GTPase drn-1, may regulate acetylcholine release at the neuromuscular junctions probably downstream of G-protein gsa-1 and adenylate cyclase acy-1. The chain is Rap guanine nucleotide exchange factor 1 (epac-1) from Caenorhabditis elegans.